The following is a 160-amino-acid chain: Photosystem I reaction center subunit XI (160 aa).

2 consecutive transmembrane segments (helical) span residues 84–104 and 125–145; these read LIPA…YGLV and FAAG…FLLE.

Belongs to the PsaL family.

Its subcellular location is the cellular thylakoid membrane. The protein is Photosystem I reaction center subunit XI of Microcystis aeruginosa (strain NIES-843 / IAM M-2473).